Consider the following 378-residue polypeptide: Erythronate-4-phosphate dehydrogenase (378 aa).

Residues serine 45 and threonine 66 each coordinate substrate. NAD(+) is bound by residues aspartate 146 and threonine 175. Residue arginine 208 is part of the active site. Aspartate 232 serves as a coordination point for NAD(+). Residue glutamate 237 is part of the active site. Histidine 254 serves as the catalytic Proton donor. Glycine 257 provides a ligand contact to NAD(+). Tyrosine 258 is a substrate binding site.

The protein belongs to the D-isomer specific 2-hydroxyacid dehydrogenase family. PdxB subfamily. As to quaternary structure, homodimer.

The protein localises to the cytoplasm. The enzyme catalyses 4-phospho-D-erythronate + NAD(+) = (R)-3-hydroxy-2-oxo-4-phosphooxybutanoate + NADH + H(+). It participates in cofactor biosynthesis; pyridoxine 5'-phosphate biosynthesis; pyridoxine 5'-phosphate from D-erythrose 4-phosphate: step 2/5. Catalyzes the oxidation of erythronate-4-phosphate to 3-hydroxy-2-oxo-4-phosphonooxybutanoate. This chain is Erythronate-4-phosphate dehydrogenase, found in Pectobacterium atrosepticum (strain SCRI 1043 / ATCC BAA-672) (Erwinia carotovora subsp. atroseptica).